We begin with the raw amino-acid sequence, 273 residues long: Undecaprenyl-diphosphatase (273 aa).

Helical transmembrane passes span Leu4 to Ile24, Lys43 to Tyr63, Phe82 to Lys102, Leu108 to Ala128, Ala183 to Val203, Met217 to Ile237, and Ile253 to Gly273.

Belongs to the UppP family.

The protein resides in the cell inner membrane. It catalyses the reaction di-trans,octa-cis-undecaprenyl diphosphate + H2O = di-trans,octa-cis-undecaprenyl phosphate + phosphate + H(+). Its function is as follows. Catalyzes the dephosphorylation of undecaprenyl diphosphate (UPP). Confers resistance to bacitracin. This chain is Undecaprenyl-diphosphatase, found in Nitrosomonas eutropha (strain DSM 101675 / C91 / Nm57).